A 483-amino-acid chain; its full sequence is Trigger factor (483 aa).

Residues 166 to 251 (TDTVNIDYVG…INDVFTKEKP (86 aa)) form the PPIase FKBP-type domain. Positions 435-460 (GEEPKLSTTKKVVEPTEEKTRKDSKM) are enriched in basic and acidic residues. Residues 435-483 (GEEPKLSTTKKVVEPTEEKTRKDSKMSTKKPAAKPAAKPAAATKKPVKK) are disordered. The segment covering 467 to 483 (AKPAAKPAAATKKPVKK) has biased composition (low complexity).

This sequence belongs to the FKBP-type PPIase family. Tig subfamily.

Its subcellular location is the cytoplasm. It carries out the reaction [protein]-peptidylproline (omega=180) = [protein]-peptidylproline (omega=0). In terms of biological role, involved in protein export. Acts as a chaperone by maintaining the newly synthesized protein in an open conformation. Functions as a peptidyl-prolyl cis-trans isomerase. The polypeptide is Trigger factor (Mycoplasma mobile (strain ATCC 43663 / 163K / NCTC 11711) (Mesomycoplasma mobile)).